A 387-amino-acid chain; its full sequence is Methyltransferase phomM (387 aa).

The interval 98–223 (PHRPKDLHIL…QSVADLFTTL (126 aa)) is methyltransferase domain.

The protein belongs to the class I-like SAM-binding methyltransferase superfamily. Erg6/SMT family.

Its pathway is mycotoxin biosynthesis. Its function is as follows. Methyltransferase; part of the gene cluster that mediates the biosynthesis of the phomopsins, a group of hexapeptide mycotoxins which infects lupins and causes lupinosis disease in livestock. Within the pathway, phomM acts as an S-adenosylmethionine-dependent alpha-N-methyltransferase that catalyzes two successive N-methylation reactions, converting N-desmethyl-phomopsin A to phomopsin A and phomopsin A further to an N,N-dimethylated congener called phomopsin E. The pathway starts with the processing of the precursor phomA by several endopeptidases including kexin proteases as well as the cluster-specific S41 family peptidase phomP1 and the oligopeptidase phomG to produce 10 identical copies of the hexapeptide Tyr-Val-Ile-Pro-Ile-Asp. After being excised from the precursor peptide, the core peptides are cyclized and modified post-translationally by enzymes encoded within the gene cluster. The timing and order of proteolysis of the phomA precursor and PTMs are still unknown. Two tyrosinase-like enzymes, phomQ1 and phomQ2, catalyze the chlorination and hydroxylation of Tyr, respectively. PhomYb, is proposed to be involved in the construction of the macrocyclic structure. The other 4 ustYa family proteins may be involved in PTMs that generate the unique structure of phomopsin A. PhomYa is required for the hydroxylation of C-beta of Tyr. PhomYc, phomYd, and phomYe are responsible for the biosynthesis of 2,3-dehydroisoleucine (dIle), 2,3-dehydroaspartic acid (dAsp), and 3,4-dehydroproline (dPro), respectively. While dIle formation by phomYc is indispensable for the installation of dAsp by phomYd, the order of the other PTMs have not been elucidated yet. Most of the biosynthetic enzymes likely have broad substrate specificity, and thus, there might be a metabolic grid from a precursor to phomopsin A. The enzyme(s) responsible for the biosynthesis of 3,4-dehydrovaline (dVal) have also not been identified yet. Finally, phomM acts as an S-adenosylmethionine-dependent alpha-N-methyltransferase that catalyzes two successive N-methylation reactions, converting N-desmethyl-phomopsin A to phomopsin A and phomopsin A further to an N,N-dimethylated congener called phomopsin E. The polypeptide is Methyltransferase phomM (Diaporthe leptostromiformis (Lupinosis disease fungus)).